Reading from the N-terminus, the 209-residue chain is Uridine kinase (209 aa).

Residue 12–19 (GGSGSGKT) participates in ATP binding.

The protein belongs to the uridine kinase family.

The protein localises to the cytoplasm. It carries out the reaction uridine + ATP = UMP + ADP + H(+). The enzyme catalyses cytidine + ATP = CMP + ADP + H(+). Its pathway is pyrimidine metabolism; CTP biosynthesis via salvage pathway; CTP from cytidine: step 1/3. It participates in pyrimidine metabolism; UMP biosynthesis via salvage pathway; UMP from uridine: step 1/1. This chain is Uridine kinase, found in Listeria welshimeri serovar 6b (strain ATCC 35897 / DSM 20650 / CCUG 15529 / CIP 8149 / NCTC 11857 / SLCC 5334 / V8).